Here is a 758-residue protein sequence, read N- to C-terminus: 5-methyltetrahydropteroyltriglutamate--homocysteine methyltransferase (758 aa).

Residues 17–20 and K117 contribute to the 5-methyltetrahydropteroyltri-L-glutamate site; that span reads RELK. L-homocysteine-binding positions include 434–436 and E487; that span reads IGS. L-methionine-binding positions include 434–436 and E487; that span reads IGS. Residues 518-519 and W564 each bind 5-methyltetrahydropteroyltri-L-glutamate; that span reads RC. D602 is a binding site for L-homocysteine. D602 contacts L-methionine. Residue E608 participates in 5-methyltetrahydropteroyltri-L-glutamate binding. H644, C646, and E668 together coordinate Zn(2+). H697 (proton donor) is an active-site residue. Residue C729 participates in Zn(2+) binding.

The protein belongs to the vitamin-B12 independent methionine synthase family. Zn(2+) is required as a cofactor.

The catalysed reaction is 5-methyltetrahydropteroyltri-L-glutamate + L-homocysteine = tetrahydropteroyltri-L-glutamate + L-methionine. Its pathway is amino-acid biosynthesis; L-methionine biosynthesis via de novo pathway; L-methionine from L-homocysteine (MetE route): step 1/1. Functionally, catalyzes the transfer of a methyl group from 5-methyltetrahydrofolate to homocysteine resulting in methionine formation. In Yersinia pestis bv. Antiqua (strain Antiqua), this protein is 5-methyltetrahydropteroyltriglutamate--homocysteine methyltransferase.